The following is a 312-amino-acid chain: Glycine--tRNA ligase alpha subunit (312 aa).

It belongs to the class-II aminoacyl-tRNA synthetase family. In terms of assembly, tetramer of two alpha and two beta subunits.

The protein localises to the cytoplasm. It carries out the reaction tRNA(Gly) + glycine + ATP = glycyl-tRNA(Gly) + AMP + diphosphate. The polypeptide is Glycine--tRNA ligase alpha subunit (glyQ) (Buchnera aphidicola subsp. Acyrthosiphon pisum (strain APS) (Acyrthosiphon pisum symbiotic bacterium)).